The primary structure comprises 138 residues: ATP synthase epsilon chain (138 aa).

The protein belongs to the ATPase epsilon chain family. F-type ATPases have 2 components, CF(1) - the catalytic core - and CF(0) - the membrane proton channel. CF(1) has five subunits: alpha(3), beta(3), gamma(1), delta(1), epsilon(1). CF(0) has three main subunits: a, b and c.

It localises to the cell inner membrane. Its function is as follows. Produces ATP from ADP in the presence of a proton gradient across the membrane. The protein is ATP synthase epsilon chain of Geotalea uraniireducens (strain Rf4) (Geobacter uraniireducens).